A 221-amino-acid chain; its full sequence is Adenylate kinase (221 aa).

An ATP-binding site is contributed by 10 to 15; that stretch reads GAGKGT. An NMP region spans residues 30-59; it reads STGDMLRAAVKAGTPLGLEAKRFMDAGELV. Residues T31, R36, 57-59, 85-88, and Q92 contribute to the AMP site; these read ELV and GFPR. The tract at residues 122–159 is LID; it reads GRRSHAASGRTYHVKFNPPKVEGLDDVTGEPLIQRDDD. ATP contacts are provided by residues R123 and 132-133; that span reads TY. The AMP site is built by R156 and R167. ATP is bound at residue G207.

Belongs to the adenylate kinase family. Monomer.

Its subcellular location is the cytoplasm. It catalyses the reaction AMP + ATP = 2 ADP. It functions in the pathway purine metabolism; AMP biosynthesis via salvage pathway; AMP from ADP: step 1/1. Its function is as follows. Catalyzes the reversible transfer of the terminal phosphate group between ATP and AMP. Plays an important role in cellular energy homeostasis and in adenine nucleotide metabolism. The protein is Adenylate kinase of Paraburkholderia xenovorans (strain LB400).